The chain runs to 1488 residues: Chromosome partition protein MukB (1488 aa).

34-41 contacts ATP; sequence GGNGAGKS. 3 coiled-coil regions span residues 326-418, 444-472, and 509-602; these read LEAD…QYNQ, LDTF…QTAH, and RHLA…QRAP. The segment at 666-783 is flexible hinge; the sequence is PGGAEDQRLN…SLPIFGRAAR (118 aa). Coiled-coil stretches lie at residues 835-923, 977-1116, and 1209-1265; these read EAEI…AKLE, EMLS…AKAG, and VEAI…LQSV.

Belongs to the SMC family. MukB subfamily. As to quaternary structure, homodimerization via its hinge domain. Binds to DNA via its C-terminal region. Interacts, and probably forms a ternary complex, with MukE and MukF via its C-terminal region. The complex formation is stimulated by calcium or magnesium. Interacts with tubulin-related protein FtsZ.

The protein resides in the cytoplasm. It localises to the nucleoid. In terms of biological role, plays a central role in chromosome condensation, segregation and cell cycle progression. Functions as a homodimer, which is essential for chromosome partition. Involved in negative DNA supercoiling in vivo, and by this means organize and compact chromosomes. May achieve or facilitate chromosome segregation by condensation DNA from both sides of a centrally located replisome during cell division. This chain is Chromosome partition protein MukB, found in Salmonella paratyphi B (strain ATCC BAA-1250 / SPB7).